The chain runs to 499 residues: Phenylalanine--tRNA ligase alpha subunit (499 aa).

L-phenylalanine is bound by residues threonine 342, 381–383 (QID), and phenylalanine 422. Glutamate 424 serves as a coordination point for Mg(2+). Phenylalanine 447 provides a ligand contact to L-phenylalanine.

It belongs to the class-II aminoacyl-tRNA synthetase family. Phe-tRNA synthetase alpha subunit type 2 subfamily. In terms of assembly, tetramer of two alpha and two beta subunits. Mg(2+) serves as cofactor.

Its subcellular location is the cytoplasm. The enzyme catalyses tRNA(Phe) + L-phenylalanine + ATP = L-phenylalanyl-tRNA(Phe) + AMP + diphosphate + H(+). The sequence is that of Phenylalanine--tRNA ligase alpha subunit from Pyrococcus horikoshii (strain ATCC 700860 / DSM 12428 / JCM 9974 / NBRC 100139 / OT-3).